Consider the following 206-residue polypeptide: Triosephosphate isomerase (206 aa).

Residue His76 is the Electrophile of the active site. Glu146 serves as the catalytic Proton acceptor.

The protein belongs to the triosephosphate isomerase family. In terms of assembly, homodimer.

It carries out the reaction D-glyceraldehyde 3-phosphate = dihydroxyacetone phosphate. It participates in carbohydrate biosynthesis; gluconeogenesis. Its pathway is carbohydrate degradation; glycolysis; D-glyceraldehyde 3-phosphate from glycerone phosphate: step 1/1. The protein is Triosephosphate isomerase (Tpi) of Anopheles merus (Mosquito).